The following is a 278-amino-acid chain: Putative cysteine-rich repeat secretory protein 19 (278 aa).

The first 32 residues, 1-32 (MYSSSSVSKRFVLVPIVVVVTTQLLLVRNVSS), serve as a signal peptide directing secretion. 2 consecutive Gnk2-homologous domains span residues 39-147 (YLHH…SLDT) and 160-267 (PSAK…LYPF).

Belongs to the cysteine-rich repeat secretory protein family.

It localises to the secreted. The chain is Putative cysteine-rich repeat secretory protein 19 (CRRSP19) from Arabidopsis thaliana (Mouse-ear cress).